The following is a 201-amino-acid chain: NADH-quinone oxidoreductase subunit C (201 aa).

The protein belongs to the complex I 30 kDa subunit family. In terms of assembly, NDH-1 is composed of 14 different subunits. Subunits NuoB, C, D, E, F, and G constitute the peripheral sector of the complex.

Its subcellular location is the cell inner membrane. The enzyme catalyses a quinone + NADH + 5 H(+)(in) = a quinol + NAD(+) + 4 H(+)(out). Functionally, NDH-1 shuttles electrons from NADH, via FMN and iron-sulfur (Fe-S) centers, to quinones in the respiratory chain. The immediate electron acceptor for the enzyme in this species is believed to be ubiquinone. Couples the redox reaction to proton translocation (for every two electrons transferred, four hydrogen ions are translocated across the cytoplasmic membrane), and thus conserves the redox energy in a proton gradient. This is NADH-quinone oxidoreductase subunit C from Dechloromonas aromatica (strain RCB).